Here is a 595-residue protein sequence, read N- to C-terminus: Tripeptidyl-peptidase SED3 (595 aa).

The N-terminal stretch at 1 to 22 (MLLPWQQTIIILFLGVNSLVAA) is a signal peptide. Positions 23–201 (LRNTYRTVEE…KLETIQLSSN (179 aa)) are cleaved as a propeptide — removed in mature form. 3 N-linked (GlcNAc...) asparagine glycosylation sites follow: N207, N264, and N278. Residues 209–595 (TITPQCLRDI…EILAKIVRDL (387 aa)) form the Peptidase S53 domain. Catalysis depends on charge relay system residues E285 and D289. N-linked (GlcNAc...) asparagine glycosylation is found at N298 and N365. S499 functions as the Charge relay system in the catalytic mechanism. 2 residues coordinate Ca(2+): D541 and I542. Residues N554, N557, and N569 are each glycosylated (N-linked (GlcNAc...) asparagine). Ca(2+)-binding residues include G573 and D575.

Ca(2+) is required as a cofactor.

The protein resides in the secreted. The protein localises to the extracellular space. It carries out the reaction Release of an N-terminal tripeptide from a polypeptide.. Its function is as follows. Secreted tripeptidyl-peptidase which degrades proteins at acidic pHs and is involved in virulence. The polypeptide is Tripeptidyl-peptidase SED3 (SED3) (Arthroderma otae (strain ATCC MYA-4605 / CBS 113480) (Microsporum canis)).